Here is a 126-residue protein sequence, read N- to C-terminus: Holo-[acyl-carrier-protein] synthase (126 aa).

Positions 8 and 57 each coordinate Mg(2+).

The protein belongs to the P-Pant transferase superfamily. AcpS family. Mg(2+) is required as a cofactor.

Its subcellular location is the cytoplasm. It catalyses the reaction apo-[ACP] + CoA = holo-[ACP] + adenosine 3',5'-bisphosphate + H(+). Transfers the 4'-phosphopantetheine moiety from coenzyme A to a Ser of acyl-carrier-protein. This chain is Holo-[acyl-carrier-protein] synthase, found in Trichlorobacter lovleyi (strain ATCC BAA-1151 / DSM 17278 / SZ) (Geobacter lovleyi).